Consider the following 109-residue polypeptide: FK506-binding protein (109 aa).

The 89-residue stretch at 20 to 108 folds into the PPIase FKBP-type domain; that stretch reads GKEITVHYTG…IFEVELLKVY (89 aa).

It belongs to the FKBP-type PPIase family.

It catalyses the reaction [protein]-peptidylproline (omega=180) = [protein]-peptidylproline (omega=0). Its activity is regulated as follows. Inhibited by FK506. PPIases accelerate the folding of proteins. The protein is FK506-binding protein (fbp) of Neisseria meningitidis serogroup B (strain ATCC BAA-335 / MC58).